Consider the following 217-residue polypeptide: Translation initiation factor IF-3 (217 aa).

The interval 179–217 (PRKTPLVKKEEKEAAPTKAVRTIPAPPRPTAAKVAAQQA) is disordered.

This sequence belongs to the IF-3 family. As to quaternary structure, monomer.

Its subcellular location is the cytoplasm. Functionally, IF-3 binds to the 30S ribosomal subunit and shifts the equilibrium between 70S ribosomes and their 50S and 30S subunits in favor of the free subunits, thus enhancing the availability of 30S subunits on which protein synthesis initiation begins. The protein is Translation initiation factor IF-3 of Parasynechococcus marenigrum (strain WH8102).